Reading from the N-terminus, the 256-residue chain is Type III pantothenate kinase (256 aa).

An ATP-binding site is contributed by 7-14 (DVGNTRLK). Residues Tyr96 and 103–106 (GADR) contribute to the substrate site. The active-site Proton acceptor is the Asp105. An ATP-binding site is contributed by Thr133. Thr183 serves as a coordination point for substrate.

Belongs to the type III pantothenate kinase family. As to quaternary structure, homodimer. Requires NH4(+) as cofactor. K(+) serves as cofactor.

The protein resides in the cytoplasm. The enzyme catalyses (R)-pantothenate + ATP = (R)-4'-phosphopantothenate + ADP + H(+). The protein operates within cofactor biosynthesis; coenzyme A biosynthesis; CoA from (R)-pantothenate: step 1/5. Catalyzes the phosphorylation of pantothenate (Pan), the first step in CoA biosynthesis. The protein is Type III pantothenate kinase of Verminephrobacter eiseniae (strain EF01-2).